We begin with the raw amino-acid sequence, 249 residues long: Metallo-beta-lactamase type 2 (249 aa).

The first 18 residues, 1–18 (MKTVFILISMLFPVAVMA), serve as a signal peptide directing secretion. Positions 99, 101, 103, 162, and 181 each coordinate Zn(2+). Substrate is bound by residues K184 and N193. Residue H223 coordinates Zn(2+).

It belongs to the metallo-beta-lactamase superfamily. Class-B beta-lactamase family. Monomer. The cofactor is Zn(2+).

The protein resides in the periplasm. It catalyses the reaction a beta-lactam + H2O = a substituted beta-amino acid. With respect to regulation, competitively inhibited by 4-morpholineethanesulfonic acid (MES), SB236050 and biphenyl tetrazoles (BPTs). Also inhibited by chelating agents such as EDTA and 1,10-phenanthroline. CcrA is not susceptible to inactivation by the beta-lactamase-blocking agents clavulanic acid or tazobactam. In terms of biological role, confers resistance to the different beta-lactams antibiotics (penicillin, cephalosporin and carbapenem) via the hydrolysis of the beta-lactam ring. In Bacteroides fragilis, this protein is Metallo-beta-lactamase type 2.